The chain runs to 160 residues: Endoribonuclease YbeY (160 aa).

3 residues coordinate Zn(2+): His-123, His-127, and His-133.

It belongs to the endoribonuclease YbeY family. Requires Zn(2+) as cofactor.

It localises to the cytoplasm. Its function is as follows. Single strand-specific metallo-endoribonuclease involved in late-stage 70S ribosome quality control and in maturation of the 3' terminus of the 16S rRNA. The chain is Endoribonuclease YbeY from Shouchella clausii (strain KSM-K16) (Alkalihalobacillus clausii).